The following is a 143-amino-acid chain: Nucleoside diphosphate kinase (143 aa).

ATP contacts are provided by Lys11, Phe59, Arg87, Thr93, Arg104, and Asn114. The active-site Pros-phosphohistidine intermediate is the His117.

The protein belongs to the NDK family. Homotetramer. Mg(2+) serves as cofactor.

The protein resides in the cytoplasm. The catalysed reaction is a 2'-deoxyribonucleoside 5'-diphosphate + ATP = a 2'-deoxyribonucleoside 5'-triphosphate + ADP. It catalyses the reaction a ribonucleoside 5'-diphosphate + ATP = a ribonucleoside 5'-triphosphate + ADP. Its function is as follows. Major role in the synthesis of nucleoside triphosphates other than ATP. The ATP gamma phosphate is transferred to the NDP beta phosphate via a ping-pong mechanism, using a phosphorylated active-site intermediate. In Pseudoalteromonas translucida (strain TAC 125), this protein is Nucleoside diphosphate kinase.